Here is a 311-residue protein sequence, read N- to C-terminus: ADP-L-glycero-D-manno-heptose-6-epimerase (311 aa).

NADP(+) contacts are provided by residues 10–11 (FI), 31–32 (DD), lysine 38, lysine 53, 75–79 (EGACS), and asparagine 92. Tyrosine 139 serves as the catalytic Proton acceptor. Residue lysine 143 coordinates NADP(+). Asparagine 174 is a substrate binding site. Positions 175 and 183 each coordinate NADP(+). The active-site Proton acceptor is lysine 183. Substrate contacts are provided by residues serine 185, histidine 192, 206–209 (FEGE), arginine 212, and tyrosine 275.

The protein belongs to the NAD(P)-dependent epimerase/dehydratase family. HldD subfamily. In terms of assembly, homopentamer. It depends on NADP(+) as a cofactor.

It carries out the reaction ADP-D-glycero-beta-D-manno-heptose = ADP-L-glycero-beta-D-manno-heptose. It participates in nucleotide-sugar biosynthesis; ADP-L-glycero-beta-D-manno-heptose biosynthesis; ADP-L-glycero-beta-D-manno-heptose from D-glycero-beta-D-manno-heptose 7-phosphate: step 4/4. In terms of biological role, catalyzes the interconversion between ADP-D-glycero-beta-D-manno-heptose and ADP-L-glycero-beta-D-manno-heptose via an epimerization at carbon 6 of the heptose. The protein is ADP-L-glycero-D-manno-heptose-6-epimerase of Psychromonas ingrahamii (strain DSM 17664 / CCUG 51855 / 37).